The sequence spans 597 residues: Chaperonin 60 subunit beta 3, chloroplastic (597 aa).

Residues 1–20 are disordered; the sequence is MASTFSATSSMGSSLAPPSN. A chloroplast-targeting transit peptide spans 1–29; the sequence is MASTFSATSSMGSSLAPPSNRLSSFVSIS. Residues S97 and S474 each carry the phosphoserine modification. Residues 387–489 are a coiled coil; sequence STEEVVKKRV…KETLANDEEK (103 aa).

Belongs to the chaperonin (HSP60) family. As to quaternary structure, part of the Cpn60 complex composed of 7 alpha and 7 beta subunits. Can also form a complex composed of 14 beta subunits only. Both complexes show ATPase activity. The Cpn60 complex interacts with the Cpn10 complex.

It localises to the plastid. The protein resides in the chloroplast. In terms of biological role, involved in protein assisted folding. The polypeptide is Chaperonin 60 subunit beta 3, chloroplastic (CPN60B3) (Arabidopsis thaliana (Mouse-ear cress)).